Reading from the N-terminus, the 487-residue chain is Histamine H1 receptor (487 aa).

The Extracellular portion of the chain corresponds to 1-29 (MSLPNSSCLLEDKMCEGNKTTMASPQLMP). Residues N5 and N18 are each glycosylated (N-linked (GlcNAc...) asparagine). Residues 30 to 50 (LVVVLSTISLVTVGLNLLVLY) traverse the membrane as a helical segment. The Cytoplasmic portion of the chain corresponds to 51 to 64 (AVRSERKLHTVGNL). Residues 65 to 89 (YIVSLSVADLIVGAVVMPMNILYLL) traverse the membrane as a helical segment. At 90 to 97 (MSKWSLGR) the chain is on the extracellular side. A helical transmembrane segment spans residues 98–123 (PLCLFWLSMDYVASTASIFSVFILCI). C100 and C180 are joined by a disulfide. 2 residues coordinate histamine: D107 and T112. The tract at residues 107 to 112 (DYVAST) is important for agonist binding. The Cytoplasmic portion of the chain corresponds to 124–144 (DRYRSVQQPLRYLKYRTKTRA). A phosphothreonine mark is found at T140 and T142. The helical transmembrane segment at 145–164 (SATILGAWFLSFLWVIPILG) threads the bilayer. Residues 165–188 (WNHFRQQISVRREDKCETDFYDVT) are Extracellular-facing. Residues 189–211 (WFKVMTAIINFYLPTLLMLWFYA) traverse the membrane as a helical segment. N198 lines the histamine pocket. Topologically, residues 212–416 (KIYKAVQKHC…MNRERKAAKQ (205 aa)) are cytoplasmic. Position 230 is a phosphoserine (S230). Residues 238–261 (KLRPENPKGDAKKPGKESPWEVLK) show a composition bias toward basic and acidic residues. Residues 238-286 (KLRPENPKGDAKKPGKESPWEVLKRKPKDAGGGSVLKSPSQTPKEMKSP) form a disordered region. The residue at position 279 (T279) is a Phosphothreonine. Phosphoserine occurs at positions 344 and 347. The disordered stretch occupies residues 345 to 379 (EISEDQMLGDSQSFSRTDSDTTTETAPGKGKLRSG). Over residues 353–369 (GDSQSFSRTDSDTTTET) the composition is skewed to polar residues. Residues S380, S396, and S398 each carry the phosphoserine modification. A helical membrane pass occupies residues 417 to 440 (LGFIMAAFILCWIPYFIFFMVIAF). Residues 424 to 428 (FILCW) are important for agonist binding. Position 431 (Y431) interacts with histamine. A disulfide bond links C441 and C444. At 441 to 446 (CKNCCN) the chain is on the extracellular side. Residues 447–469 (EHLHMFTIWLGYINSTLNPLIYP) traverse the membrane as a helical segment. The Cytoplasmic portion of the chain corresponds to 470 to 487 (LCNENFKKTFKRILHIRS).

It belongs to the G-protein coupled receptor 1 family. Phosphorylation at sites in the second and third cytoplasmic loops independently contribute to agonist-induced receptor down-regulation.

It localises to the cell membrane. In terms of biological role, G-protein-coupled receptor for histamine, a biogenic amine that functions as an immune modulator and a neurotransmitter. Through the H1 receptor, histamine mediates the contraction of smooth muscles and increases capillary permeability due to contraction of terminal venules. Also mediates neurotransmission in the central nervous system and thereby regulates circadian rhythms, emotional and locomotor activities as well as cognitive functions. This chain is Histamine H1 receptor, found in Pongo pygmaeus (Bornean orangutan).